A 149-amino-acid chain; its full sequence is Calmodulin (149 aa).

Ala-2 bears the N-acetylalanine mark. EF-hand domains lie at 8–43 (EQIAEFKEAFSLFDKDGDGTITTKELGTVMRSLGQN), 44–79 (PTEAELQDMINEVDADGNGTIDFPEFLTMMARKMKD), 81–116 (DSEEEIREAFRVFDKDGNGFISAAELRHVMTNLGEK), and 117–149 (LTDEEVDEMIREADIDGDGQVNYEEFVTMMMSK). Asp-21, Asp-23, Asp-25, Thr-27, Glu-32, Asp-57, Asp-59, Asn-61, Thr-63, Glu-68, Asp-94, Asp-96, Asn-98, and Glu-105 together coordinate Ca(2+). At Lys-116 the chain carries N6,N6,N6-trimethyllysine. Ca(2+)-binding residues include Asp-130, Asp-132, Asp-134, Gln-136, and Glu-141.

The protein belongs to the calmodulin family.

Its function is as follows. Calmodulin mediates the control of a large number of enzymes, ion channels and other proteins by Ca(2+). Among the enzymes to be stimulated by the calmodulin-Ca(2+) complex are a number of protein kinases and phosphatases. This is Calmodulin from Lumbricus rubellus (Humus earthworm).